The sequence spans 89 residues: Small ribosomal subunit protein uS15 (89 aa).

This sequence belongs to the universal ribosomal protein uS15 family. Part of the 30S ribosomal subunit. Forms a bridge to the 50S subunit in the 70S ribosome, contacting the 23S rRNA.

Functionally, one of the primary rRNA binding proteins, it binds directly to 16S rRNA where it helps nucleate assembly of the platform of the 30S subunit by binding and bridging several RNA helices of the 16S rRNA. Its function is as follows. Forms an intersubunit bridge (bridge B4) with the 23S rRNA of the 50S subunit in the ribosome. This chain is Small ribosomal subunit protein uS15, found in Saccharophagus degradans (strain 2-40 / ATCC 43961 / DSM 17024).